The following is a 496-amino-acid chain: Genome polyprotein (496 aa).

At 1–447 the chain is on the extracellular side; the sequence is SRCTHLENRD…HTVLGGAFNS (447 aa). Cystine bridges form between Cys-3/Cys-30, Cys-60/Cys-116, Cys-60/Cys-121, Cys-74/Cys-105, Cys-92/Cys-116, and Cys-92/Cys-121. Residues 98–111 form a fusion peptide region; that stretch reads DRGWGNHCGLFGKG. N-linked (GlcNAc...) asparagine; by host glycosylation is present at Asn-154. 2 disulfide bridges follow: Cys-186–Cys-290 and Cys-307–Cys-338. A helical transmembrane segment spans residues 448 to 468; the sequence is IFGGVGFLPKLLMGVALAWLG. Topologically, residues 469 to 479 are cytoplasmic; sequence LNTRNPTMSMS. The chain crosses the membrane as a helical span at residues 480-496; sequence FLLTGGLVLAMTLGVGA.

In terms of assembly, homodimer; in the endoplasmic reticulum and Golgi. In terms of processing, N-glycosylated.

The protein resides in the virion membrane. It localises to the host endoplasmic reticulum membrane. Binds to host cell surface receptor and mediates fusion between viral and cellular membranes. Envelope protein is synthesized in the endoplasmic reticulum in the form of heterodimer with protein prM. They play a role in virion budding in the ER, and the newly formed immature particle is covered with 60 spikes composed of heterodimer between precursor prM and envelope protein E. The virion is transported to the Golgi apparatus where the low pH causes dissociation of PrM-E heterodimers and formation of E homodimers. prM-E cleavage is ineficient, and many virions are only partially matured. These uncleaved prM would play a role in immune evasion. The polypeptide is Genome polyprotein (Bos taurus (Bovine)).